The chain runs to 566 residues: Alpha-N-acetylgalactosaminide alpha-2,6-sialyltransferase 1 (566 aa).

The Cytoplasmic segment spans residues Met1–Arg16. The helical; Signal-anchor for type II membrane protein transmembrane segment at Trp17–Met37 threads the bilayer. Residues Glu38–Ser566 are Lumenal-facing. Residues Asn66 and Asn132 are each glycosylated (N-linked (GlcNAc...) asparagine). The interval Ala138–Gly161 is disordered. Asn192 carries an N-linked (GlcNAc...) asparagine glycan. Copy 1 of the repeat occupies Ser247–Cys254. The interval Ser247–Cys337 is 2 X 8 AA repeats of S-S-S-X-V-S-T-C. 2 disulfide bridges follow: Cys254–Cys337 and Cys340–Cys508. Asn275, Asn286, Asn306, Asn329, and Asn333 each carry an N-linked (GlcNAc...) asparagine glycan. Repeat 2 spans residues Ser330–Cys337.

This sequence belongs to the glycosyltransferase 29 family. Heart, kidney, testes, brain, liver and lung.

The protein localises to the golgi apparatus membrane. It carries out the reaction a beta-D-galactosyl-(1-&gt;3)-N-acetyl-alpha-D-galactosaminyl derivative + CMP-N-acetyl-beta-neuraminate = a beta-D-galactosyl-(1-&gt;3)-[N-acetyl-alpha-neuraminyl-(2-&gt;6)]-N-acetyl-alpha-D-galactosaminyl derivative + CMP + H(+). It catalyses the reaction a 3-O-[N-acetyl-alpha-D-galactosaminyl]-L-seryl-[protein] + CMP-N-acetyl-beta-neuraminate = a 3-O-[N-acetyl-alpha-neuraminosyl-(2-&gt;6)-N-acetyl-alpha-D-galactosaminyl]-L-seryl-[protein] + CMP + H(+). The catalysed reaction is a 3-O-[N-acetyl-alpha-D-galactosaminyl]-L-threonyl-[protein] + CMP-N-acetyl-beta-neuraminate = a 3-O-[N-acetyl-alpha-neuraminosyl-(2-&gt;6)-N-acetyl-alpha-D-galactosaminyl]-L-threonyl-[protein] + CMP + H(+). The enzyme catalyses a 3-O-[beta-D-galactosyl-(1-&gt;3)-N-acetyl-alpha-D-galactosaminyl]-L-seryl-[protein] + CMP-N-acetyl-beta-neuraminate = a 3-O-{beta-D-galactosyl-(1-&gt;3)-[N-acetyl-alpha-neuraminosyl-(2-&gt;6)]-N-acetyl-alpha-D-galactosaminyl}-L-seryl-[protein] + CMP + H(+). It carries out the reaction a 3-O-[beta-D-galactosyl-(1-&gt;3)-N-acetyl-alpha-D-galactosaminyl]-L-threonyl-[protein] + CMP-N-acetyl-beta-neuraminate = a 3-O-{beta-D-galactosyl-(1-&gt;3)-[N-acetyl-alpha-neuraminosyl-(2-&gt;6)]-N-acetyl-alpha-D-galactosaminyl}-L-threonyl-[protein] + CMP + H(+). It catalyses the reaction a 3-O-[N-acetyl-alpha-neuraminyl-(2-&gt;3)-beta-D-galactosyl-(1-&gt;3)-N-acetyl-alpha-D-galactosaminyl]-L-threonyl-[protein] + CMP-N-acetyl-beta-neuraminate = a 3-O-{alpha-Neu5Ac-(2-&gt;3)-beta-D-Gal-(1-&gt;3)-[alpha-Neu5Ac-(2-&gt;6)]-alpha-D-GalNAc}-L-threonyl-[protein] + CMP + H(+). The protein operates within protein modification; protein glycosylation. Protein sialyltransferase specifically expressed in goblet cells that plays a key role in intestinal host-commensal homeostasis. Conjugates sialic acid with an alpha-2-6 linkage to N-acetylgalactosamine (GalNAc) glycan chains linked to serine or threonine in glycoproteins. Generates sialylated T and Tn antigens.. This Gallus gallus (Chicken) protein is Alpha-N-acetylgalactosaminide alpha-2,6-sialyltransferase 1 (ST6GALNAC1).